The sequence spans 181 residues: Adenine phosphoribosyltransferase (181 aa).

Belongs to the purine/pyrimidine phosphoribosyltransferase family. As to quaternary structure, homodimer.

The protein localises to the cytoplasm. It carries out the reaction AMP + diphosphate = 5-phospho-alpha-D-ribose 1-diphosphate + adenine. The protein operates within purine metabolism; AMP biosynthesis via salvage pathway; AMP from adenine: step 1/1. Its function is as follows. Catalyzes a salvage reaction resulting in the formation of AMP, that is energically less costly than de novo synthesis. The chain is Adenine phosphoribosyltransferase from Shewanella woodyi (strain ATCC 51908 / MS32).